The primary structure comprises 368 residues: Flagellar P-ring protein (368 aa).

A signal peptide spans 1–22; the sequence is MLIPLARAVLALELLGAGAAHA.

It belongs to the FlgI family. The basal body constitutes a major portion of the flagellar organelle and consists of four rings (L,P,S, and M) mounted on a central rod.

It localises to the periplasm. Its subcellular location is the bacterial flagellum basal body. In terms of biological role, assembles around the rod to form the L-ring and probably protects the motor/basal body from shearing forces during rotation. This is Flagellar P-ring protein from Bordetella pertussis (strain Tohama I / ATCC BAA-589 / NCTC 13251).